A 335-amino-acid polypeptide reads, in one-letter code: Large ribosomal subunit protein uL10 (335 aa).

The disordered stretch occupies residues 304–335 (GAAAPVEEAPVEEKKEEKKEEAAAPAGLGMLF). Residues 314–325 (VEEKKEEKKEEA) show a composition bias toward basic and acidic residues.

This sequence belongs to the universal ribosomal protein uL10 family. As to quaternary structure, part of the 50S ribosomal subunit. Homodimer, it forms part of the ribosomal stalk which helps the ribosome interact with GTP-bound translation factors. Forms both a pentameric L10(L12)2(L12)2 and heptameric L10(L12)2(L12)2(L12)2 complex, where L10 forms an elongated spine to which the L12 dimers bind in a sequential fashion. The proportion of heptameric complexes increases during cell growth.

Its function is as follows. Forms part of the ribosomal stalk, playing a central role in the interaction of the ribosome with GTP-bound translation factors. The sequence is that of Large ribosomal subunit protein uL10 from Methanococcus maripaludis (strain DSM 14266 / JCM 13030 / NBRC 101832 / S2 / LL).